Consider the following 231-residue polypeptide: 7-cyano-7-deazaguanine synthase (231 aa).

8 to 18 (FSGGQDSTTCL) lines the ATP pocket. Residues Cys188, Cys197, Cys200, and Cys203 each coordinate Zn(2+).

Belongs to the QueC family. It depends on Zn(2+) as a cofactor.

It catalyses the reaction 7-carboxy-7-deazaguanine + NH4(+) + ATP = 7-cyano-7-deazaguanine + ADP + phosphate + H2O + H(+). It functions in the pathway purine metabolism; 7-cyano-7-deazaguanine biosynthesis. In terms of biological role, catalyzes the ATP-dependent conversion of 7-carboxy-7-deazaguanine (CDG) to 7-cyano-7-deazaguanine (preQ(0)). The chain is 7-cyano-7-deazaguanine synthase from Escherichia coli (strain SE11).